A 202-amino-acid polypeptide reads, in one-letter code: Adenylyl-sulfate kinase (202 aa).

31-38 provides a ligand contact to ATP; that stretch reads GLSASGKS. Ser105 serves as the catalytic Phosphoserine intermediate.

The protein belongs to the APS kinase family.

The enzyme catalyses adenosine 5'-phosphosulfate + ATP = 3'-phosphoadenylyl sulfate + ADP + H(+). It functions in the pathway sulfur metabolism; hydrogen sulfide biosynthesis; sulfite from sulfate: step 2/3. Its function is as follows. Catalyzes the synthesis of activated sulfate. This chain is Adenylyl-sulfate kinase (MET14), found in Saccharomyces cerevisiae (strain ATCC 204508 / S288c) (Baker's yeast).